Consider the following 161-residue polypeptide: MPSFDIVSEIDVQEVDNAVNQARKEIEARYDFKGSKAELQWDKKEMVLLAEDDYKIGAMAGILQTKLHRRGIDIKAIKFEKIEEAGGRMLRQKVTLVQGIDREIAKDIIKLIKDSKLKVQPQVADDKLKVTSKSIDELQECISLVRGGNFPLPLQFNNMRA.

The protein belongs to the YajQ family.

Its function is as follows. Nucleotide-binding protein. This Bdellovibrio bacteriovorus (strain ATCC 15356 / DSM 50701 / NCIMB 9529 / HD100) protein is Nucleotide-binding protein Bd0338.